The chain runs to 286 residues: Undecaprenyl-diphosphatase (286 aa).

A run of 7 helical transmembrane segments spans residues 43-63 (FWKM…PIYF), 91-111 (LTII…KIIG), 118-138 (IIMG…DVMF), 150-170 (MSVG…VFPG), 189-209 (AAAL…ATCY), 236-256 (ITLA…VAWF), and 264-284 (GFVP…AWAL).

It belongs to the UppP family.

Its subcellular location is the cell inner membrane. The catalysed reaction is di-trans,octa-cis-undecaprenyl diphosphate + H2O = di-trans,octa-cis-undecaprenyl phosphate + phosphate + H(+). In terms of biological role, catalyzes the dephosphorylation of undecaprenyl diphosphate (UPP). Confers resistance to bacitracin. This is Undecaprenyl-diphosphatase from Koribacter versatilis (strain Ellin345).